The chain runs to 401 residues: MGILGIIVEYNPFHNGHLYHLQTSKELTKCDYTIAVMSGNFVQRGEPAIVDKWKRTQMALKAGIDLVIELPVVYATSTAENFAYGAVKLLDSLKIVDCISFGSEKGDLNELTKIAEILLEEPIYYRKALKEYLKSGITFAKARELALQKVINNNEIEKILQTSNNILAIEYLKSLKKIGSSITPFTIKRKGSLYTSLELKGEFASASSIRKHIFEKGLEGLEKYIPDFTKEILQSSFEKKQGPVSLEEFSNILIYLLRNHIPLNHIFDVSEGLENKIYKASYKTNNVEELMKLVKSKRYTESRIRHILIHLLLNIDKQIFKEFDGPNYIRVLGFNEKGKEMLREIKKKSPLPIITKVSQYKEKLSNTKMFEKDLFATDIYTLAYKNSSIAGLDFIHPLIKL.

ATP-binding positions include 7–20 (IVEYNPFHNGHLYH), G102, N164, and R189.

It belongs to the TmcAL family.

The protein localises to the cytoplasm. It carries out the reaction cytidine(34) in elongator tRNA(Met) + acetate + ATP = N(4)-acetylcytidine(34) in elongator tRNA(Met) + AMP + diphosphate. Functionally, catalyzes the formation of N(4)-acetylcytidine (ac(4)C) at the wobble position of elongator tRNA(Met), using acetate and ATP as substrates. First activates an acetate ion to form acetyladenylate (Ac-AMP) and then transfers the acetyl group to tRNA to form ac(4)C34. The chain is tRNA(Met) cytidine acetate ligase from Thermoanaerobacter sp. (strain X514).